The sequence spans 325 residues: Homoserine O-succinyltransferase (325 aa).

The Acyl-thioester intermediate role is filled by Cys142. Substrate is bound by residues Lys163 and Ser191. The active-site Proton acceptor is His234. Glu236 is an active-site residue. Substrate is bound at residue Arg248.

The protein belongs to the MetA family.

It localises to the cytoplasm. The catalysed reaction is L-homoserine + succinyl-CoA = O-succinyl-L-homoserine + CoA. Its pathway is amino-acid biosynthesis; L-methionine biosynthesis via de novo pathway; O-succinyl-L-homoserine from L-homoserine: step 1/1. Transfers a succinyl group from succinyl-CoA to L-homoserine, forming succinyl-L-homoserine. The polypeptide is Homoserine O-succinyltransferase (Bradyrhizobium japonicum).